Consider the following 920-residue polypeptide: Anoctamin-4 (920 aa).

Over 1-323 the chain is Cytoplasmic; sequence METSSSGITN…LYFAWLGWYT (323 aa). The disordered stretch occupies residues 38 to 64; it reads KDDDSLLHPGNLTSTSDDASRLEAGGE. Residues 324-344 form a helical membrane-spanning segment; the sequence is GMLFPAAFIGLFVFLYGVITL. Topologically, residues 345–389 are extracellular; the sequence is DHCQVSKEVCQATDIIMCPVCDKYCPFMRLSDSCVYAKVTHLFDN. Residues 390-410 traverse the membrane as a helical segment; the sequence is GATVFFAVFMAVWATVFLEFW. Over 411–470 the chain is Cytoplasmic; sequence KRRRAVIAYDWDLIDWEEEEEEIRPQFEAKYSKKERMNPISGKPEPYQAFADKCSRLIVS. Residues 471–491 traverse the membrane as a helical segment; sequence ASGIFFMICVVIAAVFGIVIY. The Extracellular segment spans residues 492–512; it reads RVVTVSTFAAFKWALIRNNSQ. Asn509 is a glycosylation site (N-linked (GlcNAc...) asparagine). The helical transmembrane segment at 513-533 threads the bilayer; the sequence is VATTGTAVCINFCIIMLLNVL. Topologically, residues 534–560 are cytoplasmic; it reads YEKVALLLTNLEQPRTESEWENSFTLK. The helical transmembrane segment at 561-581 threads the bilayer; the sequence is MFLFQFVNLNSSTFYIAFFLG. The Extracellular segment spans residues 582-680; it reads RFTGHPGAYL…AYGLFDEYLE (99 aa). The helical transmembrane segment at 681 to 701 threads the bilayer; that stretch reads MILQFGFTTIFVAAFPLAPLL. At 702–733 the chain is on the cytoplasmic side; the sequence is ALLNNIIEIRLDAYKFVTQWRRPLASRAKDIG. A helical transmembrane segment spans residues 734-754; the sequence is IWYGILEGIGILSVITNAFVI. Topologically, residues 755-850 are extracellular; it reads AITSDFIPRL…QFWHVLAARL (96 aa). Residues Asn789 and Asn802 are each glycosylated (N-linked (GlcNAc...) asparagine). Residues 851–871 form a helical membrane-spanning segment; the sequence is AFIIVFEHLVFCIKHLISYLI. The Cytoplasmic segment spans residues 872-920; sequence PDLPKDLRDRMRREKYLIQEMMYEAELERLQKERKERKKNGKAHHNEWP.

The protein belongs to the anoctamin family.

It localises to the cell membrane. It catalyses the reaction a 1,2-diacyl-sn-glycero-3-phospho-L-serine(in) = a 1,2-diacyl-sn-glycero-3-phospho-L-serine(out). It carries out the reaction a beta-D-galactosyl-(1&lt;-&gt;1')-N-acylsphing-4-enine(out) = a beta-D-galactosyl-(1&lt;-&gt;1')-N-acylsphing-4-enine(in). The enzyme catalyses a 1,2-diacyl-sn-glycero-3-phosphocholine(in) = a 1,2-diacyl-sn-glycero-3-phosphocholine(out). In terms of biological role, has calcium-dependent phospholipid scramblase activity; scrambles phosphatidylserine, phosphatidylcholine and galactosylceramide. Does not exhibit calcium-activated chloride channel (CaCC) activity. The polypeptide is Anoctamin-4 (Bos taurus (Bovine)).